The primary structure comprises 387 residues: Exodeoxyribonuclease 7 large subunit (387 aa).

This sequence belongs to the XseA family. Heterooligomer composed of large and small subunits.

It is found in the cytoplasm. It catalyses the reaction Exonucleolytic cleavage in either 5'- to 3'- or 3'- to 5'-direction to yield nucleoside 5'-phosphates.. Bidirectionally degrades single-stranded DNA into large acid-insoluble oligonucleotides, which are then degraded further into small acid-soluble oligonucleotides. This Campylobacter lari (strain RM2100 / D67 / ATCC BAA-1060) protein is Exodeoxyribonuclease 7 large subunit.